A 148-amino-acid polypeptide reads, in one-letter code: Snaclec 6 (148 aa).

The N-terminal stretch at 1-23 (MGRFIFVSFGLLVMFLSLSGTEA) is a signal peptide. 3 disulfide bridges follow: C27–C38, C55–C144, and C121–C136. In terms of domain architecture, C-type lectin spans 34-145 (YDQNCYKAFE…CSGTHNFVCK (112 aa)). N-linked (GlcNAc...) asparagine glycosylation is present at N130.

Belongs to the snaclec family. Heterodimer; disulfide-linked. As to expression, expressed by the venom gland.

It localises to the secreted. Functionally, interferes with one step of hemostasis (modulation of platelet aggregation, or coagulation cascade, for example). In Bitis arietans (African puff adder), this protein is Snaclec 6.